A 348-amino-acid polypeptide reads, in one-letter code: NADH-ubiquinone oxidoreductase chain 2 (348 aa).

Transmembrane regions (helical) follow at residues 3–23 (PTVL…TFIG), 25–45 (HWLL…PLMI), 59–79 (YFIT…TNAW), 95–115 (ATLA…HFWL), 149–171 (LNSN…GGLN), 178–198 (ILAY…HYSP), 199–219 (SLTL…FLLF), 242–262 (VIAL…GFMP), 274–294 (SLII…FFYL), and 324–344 (LILL…PLIL).

The protein belongs to the complex I subunit 2 family.

The protein resides in the mitochondrion inner membrane. The enzyme catalyses a ubiquinone + NADH + 5 H(+)(in) = a ubiquinol + NAD(+) + 4 H(+)(out). Functionally, core subunit of the mitochondrial membrane respiratory chain NADH dehydrogenase (Complex I) that is believed to belong to the minimal assembly required for catalysis. Complex I functions in the transfer of electrons from NADH to the respiratory chain. The immediate electron acceptor for the enzyme is believed to be ubiquinone. The chain is NADH-ubiquinone oxidoreductase chain 2 (MT-ND2) from Scyliorhinus canicula (Small-spotted catshark).